Consider the following 404-residue polypeptide: Cysteine desulfurase IscS (404 aa).

Pyridoxal 5'-phosphate is bound by residues 73-74 (AT), Asn-153, Gln-181, and 201-203 (SAH). Lys-204 carries the N6-(pyridoxal phosphate)lysine modification. Thr-241 serves as a coordination point for pyridoxal 5'-phosphate. Cys-327 functions as the Cysteine persulfide intermediate in the catalytic mechanism. [2Fe-2S] cluster is bound at residue Cys-327.

The protein belongs to the class-V pyridoxal-phosphate-dependent aminotransferase family. NifS/IscS subfamily. Homodimer. Forms a heterotetramer with IscU, interacts with other sulfur acceptors. It depends on pyridoxal 5'-phosphate as a cofactor.

It localises to the cytoplasm. It catalyses the reaction (sulfur carrier)-H + L-cysteine = (sulfur carrier)-SH + L-alanine. Its pathway is cofactor biosynthesis; iron-sulfur cluster biosynthesis. Master enzyme that delivers sulfur to a number of partners involved in Fe-S cluster assembly, tRNA modification or cofactor biosynthesis. Catalyzes the removal of elemental sulfur atoms from cysteine to produce alanine. Functions as a sulfur delivery protein for Fe-S cluster synthesis onto IscU, an Fe-S scaffold assembly protein, as well as other S acceptor proteins. The sequence is that of Cysteine desulfurase IscS from Anaeromyxobacter dehalogenans (strain 2CP-C).